We begin with the raw amino-acid sequence, 360 residues long: MIVKSLELSNFRNYENLSLEFSPSTNILYGDNAQGKTNILEAVFLCATTKSHKGSKDREIIKLQSEEAHIRMRINRDDVDHRLDMHLKKNKPKGVAIDGIPIKRSSELFGIINVVFFSPEDLSIIKNGPSERRRFIDMELCQLSKLYLHNLINYNKVLNQRNNLLKQIGFNKSLLDTLYVWDQQLIHFGSALIKERDAFMKSMNELIIALHKKLSDGKEELEIVYEASVAESEFENKLKKSMERDIALKVTNVGPHRDDLSFLINGQDVRKYGSQGQQRTAALSLKLAEIELVKQVTKDKPILLLDDVLSELDRKRQNQLLDSIVGIQTIVTCTGLEEFVNNRIETDRIYKVIQGTVEKG.

30 to 37 (GDNAQGKT) lines the ATP pocket.

This sequence belongs to the RecF family.

The protein localises to the cytoplasm. In terms of biological role, the RecF protein is involved in DNA metabolism; it is required for DNA replication and normal SOS inducibility. RecF binds preferentially to single-stranded, linear DNA. It also seems to bind ATP. This chain is DNA replication and repair protein RecF, found in Lachnoclostridium phytofermentans (strain ATCC 700394 / DSM 18823 / ISDg) (Clostridium phytofermentans).